The chain runs to 444 residues: MKKLNINDYNDILNEVLNDIRPTELEKDKLKVFSDKIIAKIKDISKYPVLDIIQVGSTARDANLKDDHDLDIFLRFEKETDRDTLKESGLRIGKEVIDYFNGKSWVEYAEHPYVSGEIEKFNLDIVPCYGIENCEKIISAVDRTPLHNEFLIMSYKNKNLSDDIRLLKKFLKGLGIYGSDLKTAGFSGYLCELLILKYGGFLSLLSDVKNWRPNKSIVLNEIYEMYDLKKEHEFLNFDDSLVVYDPVDLNRNVAAALNEENLCKFIFYSKMFLENPSKEFFYGFDKKITDFLNIRERGYLLTLEISRPENIVEDVIYPQMEKIQKSINKLIKEHDFEYIRYQNFADENTCYLSWEFLIHELPDVKIRTGPPVYSEPGVVNFITHNEHYFVKGCNVCAYKTRKYKNIQILFEDIVNGKLRKIITYPKYVCPENAEIRLGTFVERT.

2 residues coordinate ATP: serine 57 and arginine 60. CTP contacts are provided by serine 57 and arginine 60. 3 residues coordinate Mg(2+): aspartate 69, aspartate 71, and aspartate 124. Histidine 147, lysine 168, and tyrosine 177 together coordinate ATP. Residues histidine 147, lysine 168, and tyrosine 177 each coordinate CTP.

This sequence belongs to the tRNA nucleotidyltransferase/poly(A) polymerase family. Archaeal CCA-adding enzyme subfamily. Homodimer. The cofactor is Mg(2+).

The enzyme catalyses a tRNA precursor + 2 CTP + ATP = a tRNA with a 3' CCA end + 3 diphosphate. It carries out the reaction a tRNA with a 3' CCA end + 2 CTP + ATP = a tRNA with a 3' CCACCA end + 3 diphosphate. Catalyzes the addition and repair of the essential 3'-terminal CCA sequence in tRNAs without using a nucleic acid template. Adds these three nucleotides in the order of C, C, and A to the tRNA nucleotide-73, using CTP and ATP as substrates and producing inorganic pyrophosphate. tRNA 3'-terminal CCA addition is required both for tRNA processing and repair. Also involved in tRNA surveillance by mediating tandem CCA addition to generate a CCACCA at the 3' terminus of unstable tRNAs. While stable tRNAs receive only 3'-terminal CCA, unstable tRNAs are marked with CCACCA and rapidly degraded. This is CCA-adding enzyme from Methanococcus maripaludis (strain C5 / ATCC BAA-1333).